The following is a 475-amino-acid chain: NADH-quinone oxidoreductase subunit N 1 (475 aa).

Transmembrane regions (helical) follow at residues 8-28 (VMPL…EAAT), 36-56 (LFAI…PSEP), 67-87 (GGFF…ITLI), 100-120 (GEYY…SAAA), 122-142 (LTIL…LAGI), 157-177 (FLLG…IYGA), 199-219 (FLSG…AVPF), 244-264 (AAAL…LETF), 268-288 (PTAI…AALI), 295-315 (MFAY…ATGT), 322-342 (VLYY…IIIL), 366-386 (AFLM…GGFI), 403-423 (LAVA…RVVI), and 443-463 (ATIA…SLLI).

It belongs to the complex I subunit 2 family. NDH-1 is composed of 14 different subunits. Subunits NuoA, H, J, K, L, M, N constitute the membrane sector of the complex.

The protein resides in the cell inner membrane. The catalysed reaction is a quinone + NADH + 5 H(+)(in) = a quinol + NAD(+) + 4 H(+)(out). NDH-1 shuttles electrons from NADH, via FMN and iron-sulfur (Fe-S) centers, to quinones in the respiratory chain. The immediate electron acceptor for the enzyme in this species is believed to be a menaquinone. Couples the redox reaction to proton translocation (for every two electrons transferred, four hydrogen ions are translocated across the cytoplasmic membrane), and thus conserves the redox energy in a proton gradient. This Chloroherpeton thalassium (strain ATCC 35110 / GB-78) protein is NADH-quinone oxidoreductase subunit N 1.